The primary structure comprises 74 residues: Probable molt-inhibiting hormone (74 aa).

Cystine bridges form between C6–C43, C23–C39, and C26–C52. A74 bears the Alanine amide mark.

The protein resides in the secreted. Functionally, inhibits Y-organs where molting hormone (ecdysteroid) is secreted. A molting cycle is initiated when MIH secretion diminishes or stops. Has little or no hyperglycemic activity. The polypeptide is Probable molt-inhibiting hormone (Jasus lalandii (Cape rock lobster)).